A 121-amino-acid polypeptide reads, in one-letter code: Small ribosomal subunit protein uS13 (121 aa).

Residues 91–121 are disordered; the sequence is HRRGLPVRGQNTKNNARTRKGPSKTVAGKKK. Residues 106-121 are compositionally biased toward basic residues; sequence ARTRKGPSKTVAGKKK.

This sequence belongs to the universal ribosomal protein uS13 family. Part of the 30S ribosomal subunit. Forms a loose heterodimer with protein S19. Forms two bridges to the 50S subunit in the 70S ribosome.

Located at the top of the head of the 30S subunit, it contacts several helices of the 16S rRNA. In the 70S ribosome it contacts the 23S rRNA (bridge B1a) and protein L5 of the 50S subunit (bridge B1b), connecting the 2 subunits; these bridges are implicated in subunit movement. Contacts the tRNAs in the A and P-sites. The chain is Small ribosomal subunit protein uS13 from Listeria welshimeri serovar 6b (strain ATCC 35897 / DSM 20650 / CCUG 15529 / CIP 8149 / NCTC 11857 / SLCC 5334 / V8).